Reading from the N-terminus, the 522-residue chain is 3-octaprenyl-4-hydroxybenzoate carboxy-lyase (522 aa).

Asn181 contributes to the Mn(2+) binding site. Residues 184-186 (IYR), 198-200 (RWL), and 203-204 (RG) each bind prenylated FMN. Glu247 serves as a coordination point for Mn(2+). Catalysis depends on Asp322, which acts as the Proton donor.

This sequence belongs to the UbiD family. Homohexamer. The cofactor is prenylated FMN. Mn(2+) is required as a cofactor.

The protein resides in the cell membrane. It carries out the reaction a 4-hydroxy-3-(all-trans-polyprenyl)benzoate + H(+) = a 2-(all-trans-polyprenyl)phenol + CO2. Its pathway is cofactor biosynthesis; ubiquinone biosynthesis. Catalyzes the decarboxylation of 3-octaprenyl-4-hydroxy benzoate to 2-octaprenylphenol, an intermediate step in ubiquinone biosynthesis. The protein is 3-octaprenyl-4-hydroxybenzoate carboxy-lyase of Paraburkholderia xenovorans (strain LB400).